The following is a 497-amino-acid chain: 3-octaprenyl-4-hydroxybenzoate carboxy-lyase (497 aa).

Residue N172 coordinates Mn(2+). Residues 175–177 (IYR), 189–191 (RWL), and 194–195 (RG) each bind prenylated FMN. A Mn(2+)-binding site is contributed by E238. Catalysis depends on D287, which acts as the Proton donor.

The protein belongs to the UbiD family. In terms of assembly, homohexamer. Requires prenylated FMN as cofactor. Mn(2+) serves as cofactor.

It localises to the cell membrane. It catalyses the reaction a 4-hydroxy-3-(all-trans-polyprenyl)benzoate + H(+) = a 2-(all-trans-polyprenyl)phenol + CO2. It participates in cofactor biosynthesis; ubiquinone biosynthesis. Functionally, catalyzes the decarboxylation of 3-octaprenyl-4-hydroxy benzoate to 2-octaprenylphenol, an intermediate step in ubiquinone biosynthesis. The protein is 3-octaprenyl-4-hydroxybenzoate carboxy-lyase of Enterobacter sp. (strain 638).